Here is a 314-residue protein sequence, read N- to C-terminus: Small ribosomal subunit biogenesis GTPase RsgA (314 aa).

Positions 1 to 21 are disordered; it reads MKRAPTKQPAKPAARGGERAQ. A CP-type G domain is found at 85–246; that stretch reads SDQFKSKLFA…LIDSPGFQEF (162 aa). GTP contacts are provided by residues 134-137 and 188-196; these read NKID and GQSGMGKST. Zn(2+) contacts are provided by cysteine 270, cysteine 275, histidine 277, and cysteine 283.

The protein belongs to the TRAFAC class YlqF/YawG GTPase family. RsgA subfamily. Monomer. Associates with 30S ribosomal subunit, binds 16S rRNA. Zn(2+) is required as a cofactor.

The protein resides in the cytoplasm. Its function is as follows. One of several proteins that assist in the late maturation steps of the functional core of the 30S ribosomal subunit. Helps release RbfA from mature subunits. May play a role in the assembly of ribosomal proteins into the subunit. Circularly permuted GTPase that catalyzes slow GTP hydrolysis, GTPase activity is stimulated by the 30S ribosomal subunit. The protein is Small ribosomal subunit biogenesis GTPase RsgA of Burkholderia pseudomallei (strain 1710b).